Consider the following 732-residue polypeptide: DNA-directed RNA polymerase subunit beta' (732 aa).

Cys70, Cys72, Cys85, and Cys88 together coordinate Zn(2+). Asp575, Asp577, and Asp579 together coordinate Mg(2+).

This sequence belongs to the RNA polymerase beta' chain family. RpoC1 subfamily. As to quaternary structure, in plastids the minimal PEP RNA polymerase catalytic core is composed of four subunits: alpha, beta, beta', and beta''. When a (nuclear-encoded) sigma factor is associated with the core the holoenzyme is formed, which can initiate transcription. Mg(2+) is required as a cofactor. Requires Zn(2+) as cofactor.

It is found in the plastid. The protein localises to the chloroplast. The enzyme catalyses RNA(n) + a ribonucleoside 5'-triphosphate = RNA(n+1) + diphosphate. DNA-dependent RNA polymerase catalyzes the transcription of DNA into RNA using the four ribonucleoside triphosphates as substrates. The protein is DNA-directed RNA polymerase subunit beta' of Thalassiosira pseudonana (Marine diatom).